Reading from the N-terminus, the 276-residue chain is NAD-capped RNA hydrolase NudC (276 aa).

Residue R82 coordinates substrate. Positions 112 and 115 each coordinate Zn(2+). Residue E125 participates in substrate binding. Residues C130 and C133 each coordinate Zn(2+). Substrate is bound at residue Y138. In terms of domain architecture, Nudix hydrolase spans 139-262; sequence PRLSPSMIVL…SIARYLIELY (124 aa). 3 residues coordinate a divalent metal cation: A172, E188, and E192. The Nudix box signature appears at 173-194; it reads GYVEPGESVEQCVAREVREEVG. 206–213 provides a ligand contact to substrate; that stretch reads QGWPFPHS. E233 is a binding site for a divalent metal cation. A255 is a substrate binding site.

The protein belongs to the Nudix hydrolase family. NudC subfamily. Homodimer. It depends on Mg(2+) as a cofactor. Mn(2+) is required as a cofactor. The cofactor is Zn(2+).

It catalyses the reaction a 5'-end NAD(+)-phospho-ribonucleoside in mRNA + H2O = a 5'-end phospho-adenosine-phospho-ribonucleoside in mRNA + beta-nicotinamide D-ribonucleotide + 2 H(+). The enzyme catalyses NAD(+) + H2O = beta-nicotinamide D-ribonucleotide + AMP + 2 H(+). It carries out the reaction NADH + H2O = reduced beta-nicotinamide D-ribonucleotide + AMP + 2 H(+). In terms of biological role, mRNA decapping enzyme that specifically removes the nicotinamide adenine dinucleotide (NAD) cap from a subset of mRNAs by hydrolyzing the diphosphate linkage to produce nicotinamide mononucleotide (NMN) and 5' monophosphate mRNA. The NAD-cap is present at the 5'-end of some mRNAs and stabilizes RNA against 5'-processing. Has preference for mRNAs with a 5'-end purine. Catalyzes the hydrolysis of a broad range of dinucleotide pyrophosphates. This Stutzerimonas stutzeri (strain A1501) (Pseudomonas stutzeri) protein is NAD-capped RNA hydrolase NudC.